The sequence spans 137 residues: Kunitz-type trypsin inhibitor alpha chain (137 aa).

A disulfide bridge links Cys40 with Cys86.

This sequence belongs to the protease inhibitor I3 (leguminous Kunitz-type inhibitor) family. In terms of assembly, heterodimer of an alpha and a beta chain linked by a disulfide bond.

Functionally, inhibition of trypsin. The sequence is that of Kunitz-type trypsin inhibitor alpha chain from Neltuma juliflora (Mesquite).